The following is a 238-amino-acid chain: Formate dehydrogenase, cytochrome b556 subunit (238 aa).

Heme b contacts are provided by His-23 and His-62. 4 helical membrane passes run 23–43, 60–80, 120–140, and 155–175; these read HWML…FFFP, AIHP…ALLY, MLFW…IIMW, and IAIL…LVHI. Residues His-160 and His-174 each contribute to the heme b site.

This sequence belongs to the formate dehydrogenase gamma subunit family. Formate dehydrogenase is a membrane-bound complex, formed by subunits alpha, beta and gamma. Heme is required as a cofactor.

Its subcellular location is the cell membrane. Functionally, allows to use formate as major electron donor during anaerobic respiration. Subunit gamma is probably the cytochrome b556(FDO) component of the formate dehydrogenase. The sequence is that of Formate dehydrogenase, cytochrome b556 subunit (fdxI) from Haemophilus influenzae (strain ATCC 51907 / DSM 11121 / KW20 / Rd).